We begin with the raw amino-acid sequence, 490 residues long: Cytochrome P450 2C7 (490 aa).

Arg-144 is modified (dimethylated arginine). Cys-435 contacts heme.

The protein belongs to the cytochrome P450 family. It depends on heme as a cofactor.

The protein localises to the endoplasmic reticulum membrane. The protein resides in the microsome membrane. It carries out the reaction an organic molecule + reduced [NADPH--hemoprotein reductase] + O2 = an alcohol + oxidized [NADPH--hemoprotein reductase] + H2O + H(+). In terms of biological role, cytochromes P450 are a group of heme-thiolate monooxygenases. In liver microsomes, this enzyme is involved in an NADPH-dependent electron transport pathway. It oxidizes a variety of structurally unrelated compounds, including steroids, fatty acids, and xenobiotics. In Rattus norvegicus (Rat), this protein is Cytochrome P450 2C7 (Cyp2c7).